Here is a 289-residue protein sequence, read N- to C-terminus: Early E4 34 kDa protein (289 aa).

Belongs to the adenoviridae E4 30 to 34 kDa protein family. As to quaternary structure, interacts with E1B-55k.

Its subcellular location is the host nucleus. It localises to the host cytoplasm. Its function is as follows. Plays a major role to prevent cellular inhibition of viral genome replication by nuclear bodies. Assembles an SCF-like E3 ubiquitin ligase complex based on the cellular proteins ELOB, ELOC, CUL5 and RBX1, in cooperation with viral E1B-55K. This viral RING-type ligase ubiquitinates cellular substrates prior to proteasomal degradation: p53/TP53, LIG4, MRE11-RAD50-NBS1 (MRN) complex, ITGA3, DAXX and BLM. The chain is Early E4 34 kDa protein from Human adenovirus F serotype 40 (HAdV-40).